Consider the following 247-residue polypeptide: Chymase (247 aa).

The signal sequence occupies residues Met1 to Ala19. A propeptide spans Gly20–Glu21 (activation peptide). The Peptidase S1 domain maps to Ile22 to Arg245. Cys51 and Cys67 are oxidised to a cystine. His66 (charge relay system) is an active-site residue. The N-linked (GlcNAc...) asparagine glycan is linked to Asn80. The active-site Charge relay system is the Asp110. 2 disulfides stabilise this stretch: Cys144–Cys209 and Cys175–Cys188. Ser203 (charge relay system) is an active-site residue.

This sequence belongs to the peptidase S1 family. Granzyme subfamily. As to expression, mast cells.

The protein resides in the secreted. The protein localises to the cytoplasmic granule. The catalysed reaction is Preferential cleavage: Phe-|-Xaa &gt; Tyr-|-Xaa &gt; Trp-|-Xaa &gt; Leu-|-Xaa.. Its function is as follows. Major secreted protease of mast cells with suspected roles in vasoactive peptide generation, extracellular matrix degradation, and regulation of gland secretion. The chain is Chymase (Cma1) from Mus musculus (Mouse).